Consider the following 209-residue polypeptide: Kynurenine formamidase (209 aa).

Trp-19 provides a ligand contact to substrate. His-49, His-53, and Asp-55 together coordinate Zn(2+). His-59 functions as the Proton donor/acceptor in the catalytic mechanism. 2 residues coordinate Zn(2+): His-160 and Glu-172.

This sequence belongs to the Cyclase 1 superfamily. KynB family. In terms of assembly, homodimer. Zn(2+) serves as cofactor.

It catalyses the reaction N-formyl-L-kynurenine + H2O = L-kynurenine + formate + H(+). It functions in the pathway amino-acid degradation; L-tryptophan degradation via kynurenine pathway; L-kynurenine from L-tryptophan: step 2/2. In terms of biological role, catalyzes the hydrolysis of N-formyl-L-kynurenine to L-kynurenine, the second step in the kynurenine pathway of tryptophan degradation. The sequence is that of Kynurenine formamidase from Geobacillus thermodenitrificans (strain NG80-2).